The primary structure comprises 287 residues: Protein-export membrane protein SecF (287 aa).

A run of 6 helical transmembrane segments spans residues 21-41, 129-149, 158-178, 182-202, 226-246, and 259-279; these read LIAI…FNGL, QIYW…FIIF, VILA…LFGI, LASV…DILL, VTMS…TVFV, and VLII…LGIL.

Belongs to the SecD/SecF family. SecF subfamily. As to quaternary structure, part of the protein translocation apparatus. Forms a complex with SecD.

The protein resides in the cell membrane. In terms of biological role, involved in protein export. In Methanothermobacter thermautotrophicus (strain ATCC 29096 / DSM 1053 / JCM 10044 / NBRC 100330 / Delta H) (Methanobacterium thermoautotrophicum), this protein is Protein-export membrane protein SecF.